The following is a 420-amino-acid chain: Mitogen-activated protein kinase HOG2 (420 aa).

ATP is bound by residues 29-37 (VGMGAFGLV) and Lys52. Asp144 acts as the Proton acceptor in catalysis. A Phosphothreonine modification is found at Thr174. Residues 174-176 (TGY) carry the TXY motif. Tyr176 is subject to Phosphotyrosine. The segment at 372–394 (AQHHHQTQQQSSGKHTNPTTSSS) is disordered.

Belongs to the protein kinase superfamily. Ser/Thr protein kinase family. MAP kinase subfamily. HOG1 sub-subfamily. Mg(2+) is required as a cofactor. Post-translationally, dually phosphorylated on Thr-174 and Tyr-176, which activates the enzyme.

The protein resides in the cytoplasm. Its subcellular location is the nucleus. It catalyses the reaction L-seryl-[protein] + ATP = O-phospho-L-seryl-[protein] + ADP + H(+). The enzyme catalyses L-threonyl-[protein] + ATP = O-phospho-L-threonyl-[protein] + ADP + H(+). Activated by tyrosine and threonine phosphorylation. In terms of biological role, mitogen-activated protein kinase involved in a signal transduction pathway that is activated by changes in the osmolarity of the extracellular environment. Controls osmotic regulation of transcription of target genes. This is Mitogen-activated protein kinase HOG2 (HOG2) from Zygosaccharomyces rouxii.